Here is a 540-residue protein sequence, read N- to C-terminus: Decreased expression in renal and prostate cancer protein (540 aa).

Positions 1 to 12 are enriched in basic and acidic residues; sequence MKEPRIFPRERP. Disordered regions lie at residues 1–264 and 304–389; these read MKEP…DARA and SQAS…AFSQ. Composition is skewed to low complexity over residues 113–125 and 180–192; these read PRPG…SPGS and GPSL…LTPG. Polar residues predominate over residues 304–316; it reads SQASGNMGTSPSS. At Ser313 the chain carries Phosphoserine. The segment covering 321 to 330 has biased composition (low complexity); sequence PGPIGPNSGP. Arg375 bears the Asymmetric dimethylarginine mark. The residue at position 403 (Arg403) is an Omega-N-methylarginine. Ser439 bears the Phosphoserine mark. Residues 516-540 form a disordered region; the sequence is GTNPAAFPRPGGPMAAMYPNGMLPP.

It belongs to the DERPC family.

The protein localises to the nucleus. In terms of biological role, potential tumor suppressor. This is Decreased expression in renal and prostate cancer protein from Bos taurus (Bovine).